A 485-amino-acid polypeptide reads, in one-letter code: Arginine/agmatine antiporter (485 aa).

Helical transmembrane passes span 12–34 (GTIA…SLPQ), 38–60 (ATAG…FFIA), 89–111 (IGFT…YAVI), 126–148 (GGNT…FIVL), 155–177 (SIIN…ILTA), 211–230 (TMLV…VMSG), 243–265 (VLGF…GSLF), 291–313 (VLMN…IIVA), 363–385 (WNTM…AAFL), 400–422 (IKAP…LIYA), 427–446 (YLFM…IDAG), and 461–483 (IVGM…TGRI).

Belongs to the amino acid-polyamine-organocation (APC) superfamily. Basic amino acid/polyamine antiporter (APA) (TC 2.A.3.2) family.

The protein resides in the cell inner membrane. Its function is as follows. Catalyzes the exchange of L-arginine for agmatine. The arginine uptake by the bacterium in the macrophage may be a virulence factor against the host innate immune response. In Chlamydia pneumoniae (Chlamydophila pneumoniae), this protein is Arginine/agmatine antiporter (aaxC).